The following is a 513-amino-acid chain: Keratin, type II cuticular Hb2 (513 aa).

The head stretch occupies residues 1 to 120; it reads MSYHSFQPGS…PTVQRVKRDE (120 aa). Residues 120–431 form the IF rod domain; sequence EKEQIKCLNN…RLLEGEEHRL (312 aa). The segment at 121–155 is coil 1A; that stretch reads KEQIKCLNNRFASFINKVRFLEQKNKLLETKWNFM. A linker 1 region spans residues 156-165; that stretch reads QQQRCCQTNI. Residues 166 to 266 form a coil 1B region; sequence EPIFEGYISA…YEEEICLLQS (101 aa). The tract at residues 267-283 is linker 12; that stretch reads QISETSVIVKMDNSREL. Residues 284–427 are coil 2; the sequence is DVDGIIAEIK…ATYRRLLEGE (144 aa). Residues 428-513 form a tail region; it reads EHRLCEGIGP…AGGSSPSHKH (86 aa).

It belongs to the intermediate filament family. In terms of assembly, heterotetramer of two type I and two type II keratins.

The sequence is that of Keratin, type II cuticular Hb2 (KRT82) from Homo sapiens (Human).